Consider the following 277-residue polypeptide: Large ribosomal subunit protein uL2 (277 aa).

Residues 225–277 (MNPIDHPHGGGEGKTAAGRHPVSPWGTPSKGFRTRVNKRTDGMIVRRRYSNKG) form a disordered region.

This sequence belongs to the universal ribosomal protein uL2 family. In terms of assembly, part of the 50S ribosomal subunit. Forms a bridge to the 30S subunit in the 70S ribosome.

Its function is as follows. One of the primary rRNA binding proteins. Required for association of the 30S and 50S subunits to form the 70S ribosome, for tRNA binding and peptide bond formation. It has been suggested to have peptidyltransferase activity; this is somewhat controversial. Makes several contacts with the 16S rRNA in the 70S ribosome. The polypeptide is Large ribosomal subunit protein uL2 (Nitrosospira multiformis (strain ATCC 25196 / NCIMB 11849 / C 71)).